The sequence spans 356 residues: MSRYWSDIVRQLEPYVPGEQPALAHPVKLNTNENPYPPSPRALDAIRRELGDTGEALRRYPDPVARRLRETVAAYHGIAPEQVFAGNGSDEVLAHAFQALLQHDRPLRFPDITYSFYPTYARLYRVAYETVPLADDFSIVVDDYLDDAGCVLFPNPNAPTGRALPLADIERIVAANPSSVVVIDEAYVDFGAESAVSLIARYPNLLVVHTVSKARSLAGMRVGFAFGDAALIDALTRVKDSFNSYPLDRLAQVATQASYEDEAWFQATRKQVIASRERLVGALAALGFDVVPSAANFVFARPRSHDAATLAAQLKQREIFVRHFKLPRIDQHLRITVGSDAECDALVAALRELLAA.

Lys-213 is subject to N6-(pyridoxal phosphate)lysine.

This sequence belongs to the class-II pyridoxal-phosphate-dependent aminotransferase family. Histidinol-phosphate aminotransferase subfamily. Homodimer. Requires pyridoxal 5'-phosphate as cofactor.

It carries out the reaction L-histidinol phosphate + 2-oxoglutarate = 3-(imidazol-4-yl)-2-oxopropyl phosphate + L-glutamate. The protein operates within amino-acid biosynthesis; L-histidine biosynthesis; L-histidine from 5-phospho-alpha-D-ribose 1-diphosphate: step 7/9. This chain is Histidinol-phosphate aminotransferase 1, found in Burkholderia pseudomallei (strain K96243).